A 427-amino-acid chain; its full sequence is Glutamate-1-semialdehyde 2,1-aminomutase (427 aa).

The residue at position 267 (lysine 267) is an N6-(pyridoxal phosphate)lysine.

It belongs to the class-III pyridoxal-phosphate-dependent aminotransferase family. HemL subfamily. As to quaternary structure, homodimer. Pyridoxal 5'-phosphate is required as a cofactor.

The protein resides in the cytoplasm. It catalyses the reaction (S)-4-amino-5-oxopentanoate = 5-aminolevulinate. Its pathway is porphyrin-containing compound metabolism; protoporphyrin-IX biosynthesis; 5-aminolevulinate from L-glutamyl-tRNA(Glu): step 2/2. The polypeptide is Glutamate-1-semialdehyde 2,1-aminomutase (Geotalea daltonii (strain DSM 22248 / JCM 15807 / FRC-32) (Geobacter daltonii)).